A 269-amino-acid chain; its full sequence is Cbp/p300-interacting transactivator 2 (269 aa).

The segment at 142 to 200 (AGHQMNGTNQHFRDCNPKHSGGSSTPGGAGGSGTPGGSGGTSGGAGGSSAGGSGGGSTM) is disordered. Residues 165 to 198 (STPGGAGGSGTPGGSGGTSGGAGGSSAGGSGGGS) are compositionally biased toward gly residues.

It belongs to the CITED family. Interacts (via C-terminus) with EP300 (via CH1 domain); the interaction is stimulated in response to hypoxia. Interacts with PPARA. Interacts (via C-terminus) with TFAP2A, TFAP2B and TFAP2C. Interacts (via C-terminus) with SMAD2. Interacts (via C-terminus) with SMAD3 (via MH2 domain). Interacts with LHX2 (via LIM domains). Interacts with WT1 isoform 1 and isoform 3. As to expression, ubiquitous.

It localises to the nucleus. Its function is as follows. Transcriptional coactivator of the p300/CBP-mediated transcription complex. Acts as a bridge, linking TFAP2 transcription factors and the p300/CBP transcriptional coactivator complex in order to stimulate TFAP2-mediated transcriptional activation. Positively regulates TGF-beta signaling through its association with the SMAD/p300/CBP-mediated transcriptional coactivator complex. Stimulates the peroxisome proliferator-activated receptors PPARA transcriptional activity. Enhances estrogen-dependent transactivation mediated by estrogen receptors. Also acts as a transcriptional corepressor; interferes with the binding of the transcription factors HIF1A or STAT2 and the p300/CBP transcriptional coactivator complex. Participates in sex determination and early gonad development by stimulating transcription activation of SRY. Plays a role in controlling left-right patterning during embryogenesis; potentiates transcriptional activation of NODAL-mediated gene transcription in the left lateral plate mesoderm (LPM). Plays an essential role in differentiation of the adrenal cortex from the adrenogonadal primordium (AGP); stimulates WT1-mediated transcription activation thereby up-regulating the nuclear hormone receptor NR5A1 promoter activity. Associates with chromatin to the PITX2 P1 promoter region. The polypeptide is Cbp/p300-interacting transactivator 2 (Cited2) (Mus musculus (Mouse)).